The primary structure comprises 269 residues: Interleukin-1 beta (269 aa).

A propeptide spanning residues 1–116 (MAEVPELASE…TRNNDACVHD (116 aa)) is cleaved from the precursor.

The protein belongs to the IL-1 family. In terms of assembly, monomer. In its precursor form, weakly interacts with full-length MEFV; the mature cytokine does not interact at all. Interacts with integrins ITGAV:ITGBV and ITGA5:ITGB1; integrin-binding is required for IL1B signaling. Interacts with cargo receptor TMED10; the interaction is direct and is required for the secretion of IL1B mature form. Interacts with HSP90AB1; the interaction facilitates cargo translocation into the ERGIC. Interacts with HSP90B1; the interaction facilitates cargo translocation into the ERGIC.

The protein localises to the cytoplasm. The protein resides in the cytosol. It localises to the secreted. Its subcellular location is the lysosome. It is found in the extracellular exosome. Its function is as follows. Potent pro-inflammatory cytokine. Initially discovered as the major endogenous pyrogen, induces prostaglandin synthesis, neutrophil influx and activation, T-cell activation and cytokine production, B-cell activation and antibody production, and fibroblast proliferation and collagen production. Promotes Th17 differentiation of T-cells. Synergizes with IL12/interleukin-12 to induce IFNG synthesis from T-helper 1 (Th1) cells. Plays a role in angiogenesis by inducing VEGF production synergistically with TNF and IL6. Involved in transduction of inflammation downstream of pyroptosis: its mature form is specifically released in the extracellular milieu by passing through the gasdermin-D (GSDMD) pore. This Macaca nemestrina (Pig-tailed macaque) protein is Interleukin-1 beta (IL1B).